A 177-amino-acid chain; its full sequence is ADP-ribosylation factor-like protein 17 (177 aa).

Residue G2 is the site of N-myristoyl glycine attachment. Residues 24-31 (SLDTAGKT), 67-71 (DVGSH), and 125-128 (LPHS) contribute to the GTP site.

The protein belongs to the small GTPase superfamily. Arf family.

Its subcellular location is the golgi apparatus. In terms of biological role, GTP-binding protein that functions as an allosteric activator of the cholera toxin catalytic subunit, an ADP-ribosyltransferase. Involved in protein trafficking; may modulate vesicle budding and uncoating within the Golgi apparatus. The sequence is that of ADP-ribosylation factor-like protein 17 (ARL17A) from Homo sapiens (Human).